A 573-amino-acid polypeptide reads, in one-letter code: DNA polymerase lambda (573 aa).

Residues 35–131 (EARGWLSSLR…RLTDTEGFSL (97 aa)) enclose the BRCT domain. 2 disordered regions span residues 126–204 (TEGF…GPQV) and 214–233 (TGHYPTPPEEDGGPDPAPEA). Positions 263-277 (KAYSVQGDKWRALGY) are DNA-binding. Residue Lys-310 is the Schiff-base intermediate with DNA of the active site. The DNA-binding stretch occupies residues 343-346 (GTKT). DCTP-binding positions include Arg-384, 415-418 (SYRR), and 424-427 (GDVD). The segment at 418–427 (RGKMTCGDVD) is involved in primer binding. Residues Asp-425, Asp-427, and Asp-488 each coordinate Mn(2+). Residues 464-503 (ENGQQQKYLGVCRLPGPGKRHRRLDIIVVPYCEFACALLY) form a DNA-binding region. Position 511 (Asn-511) interacts with dCTP.

It belongs to the DNA polymerase type-X family. In terms of assembly, interacts with PCNA. Interacts with PAXX; promoting POLL recruitment to double-strand breaks (DSBs) and stimulation of the end-filling activity of POLL. Interacts with XRCC4; promoting POLL recruitment to double-strand breaks (DSBs) and stimulation of the end-filling activity of POLL. Interacts with NHEJ1/XLF; promoting POLL recruitment to double-strand breaks (DSBs) and stimulation of the end-filling activity of POLL. Mn(2+) is required as a cofactor.

Its subcellular location is the nucleus. The enzyme catalyses DNA(n) + a 2'-deoxyribonucleoside 5'-triphosphate = DNA(n+1) + diphosphate. In terms of biological role, DNA polymerase that functions in several pathways of DNA repair. Involved in base excision repair (BER) responsible for repair of lesions that give rise to abasic (AP) sites in DNA. Also contributes to DNA double-strand break repair by non-homologous end joining and homologous recombination. Has both template-dependent and template-independent (terminal transferase) DNA polymerase activities. Also has a 5'-deoxyribose-5-phosphate lyase (dRP lyase) activity. The sequence is that of DNA polymerase lambda from Mus musculus (Mouse).